The following is a 95-amino-acid chain: Large ribosomal subunit protein uL23 (95 aa).

It belongs to the universal ribosomal protein uL23 family. As to quaternary structure, part of the 50S ribosomal subunit. Contacts protein L29, and trigger factor when it is bound to the ribosome.

In terms of biological role, one of the early assembly proteins it binds 23S rRNA. One of the proteins that surrounds the polypeptide exit tunnel on the outside of the ribosome. Forms the main docking site for trigger factor binding to the ribosome. The polypeptide is Large ribosomal subunit protein uL23 (Coxiella burnetii (strain CbuK_Q154) (Coxiella burnetii (strain Q154))).